The sequence spans 382 residues: Threonine synthase (382 aa).

The residue at position 93 (Lys-93) is an N6-(pyridoxal phosphate)lysine. Residues Asn-119, 219–223 (GNAGN), and Thr-347 each bind pyridoxal 5'-phosphate.

It belongs to the threonine synthase family. It depends on pyridoxal 5'-phosphate as a cofactor.

The catalysed reaction is O-phospho-L-homoserine + H2O = L-threonine + phosphate. It participates in amino-acid biosynthesis; L-threonine biosynthesis; L-threonine from L-aspartate: step 5/5. Catalyzes the gamma-elimination of phosphate from L-phosphohomoserine and the beta-addition of water to produce L-threonine. In Synechocystis sp. (strain ATCC 27184 / PCC 6803 / Kazusa), this protein is Threonine synthase (thrC).